The primary structure comprises 552 residues: Chaperonin GroEL (552 aa).

Residues 30–33, Lys-51, 87–91, Gly-415, 480–482, and Asp-496 contribute to the ATP site; these read TLGP, DGTTT, and NAA.

This sequence belongs to the chaperonin (HSP60) family. In terms of assembly, forms a cylinder of 14 subunits composed of two heptameric rings stacked back-to-back. Interacts with the co-chaperonin GroES.

Its subcellular location is the cytoplasm. It carries out the reaction ATP + H2O + a folded polypeptide = ADP + phosphate + an unfolded polypeptide.. Its function is as follows. Together with its co-chaperonin GroES, plays an essential role in assisting protein folding. The GroEL-GroES system forms a nano-cage that allows encapsulation of the non-native substrate proteins and provides a physical environment optimized to promote and accelerate protein folding. In Verminephrobacter eiseniae (strain EF01-2), this protein is Chaperonin GroEL.